Here is a 409-residue protein sequence, read N- to C-terminus: Putative actin-fragmin kinase DDB_G0268812 (409 aa).

Residues 1-45 form a disordered region; it reads MKTFRDFKKKIKNNNNNKNNKNNNINNNNSNNNKNNKNNNNNNSN. Residues 5–46 are a coiled coil; sequence RDFKKKIKNNNNNKNNKNNNINNNNSNNNKNNKNNNNNNSNN. Low complexity predominate over residues 13-45; sequence NNNNNKNNKNNNINNNNSNNNKNNKNNNNNNSN.

Belongs to the protein kinase superfamily. AFK Ser/Thr protein kinase family.

The protein is Putative actin-fragmin kinase DDB_G0268812 of Dictyostelium discoideum (Social amoeba).